Here is a 229-residue protein sequence, read N- to C-terminus: Lipoprotein-releasing system ATP-binding protein LolD 1 (229 aa).

Residues 2 to 229 (LVVSELSKSY…VRRGRFGITA (228 aa)) enclose the ABC transporter domain. 38–45 (GPSGSGKT) serves as a coordination point for ATP.

Belongs to the ABC transporter superfamily. Lipoprotein translocase (TC 3.A.1.125) family. The complex is composed of two ATP-binding proteins (LolD) and two transmembrane proteins (LolC and LolE).

Its subcellular location is the cell inner membrane. Functionally, part of the ABC transporter complex LolCDE involved in the translocation of mature outer membrane-directed lipoproteins, from the inner membrane to the periplasmic chaperone, LolA. Responsible for the formation of the LolA-lipoprotein complex in an ATP-dependent manner. In Rhodopirellula baltica (strain DSM 10527 / NCIMB 13988 / SH1), this protein is Lipoprotein-releasing system ATP-binding protein LolD 1.